The primary structure comprises 361 residues: Small ribosomal subunit protein mS46 (361 aa).

The N-terminal 14 residues, 1-14, are a transit peptide targeting the mitochondrion; the sequence is MRSSMFRCVSRAHY. The disordered stretch occupies residues 37-99; sequence ASSNALKLDK…SDSVRANKQQ (63 aa). Positions 43-52 are enriched in basic and acidic residues; sequence KLDKMKEGRM. Residues 59 to 68 show a composition bias toward low complexity; that stretch reads GNQNRNSMNN. Over residues 69-91 the composition is skewed to basic and acidic residues; it reads KESRGREGNQGERNMRLKNRSSD.

Belongs to the mitochondrion-specific ribosomal protein mS46 family. Component of the mitochondrial small ribosomal subunit (mt-SSU). Mature yeast 74S mitochondrial ribosomes consist of a small (37S) and a large (54S) subunit. The 37S small subunit contains a 15S ribosomal RNA (15S mt-rRNA) and 34 different proteins. The 54S large subunit contains a 21S rRNA (21S mt-rRNA) and 46 different proteins.

Its subcellular location is the mitochondrion. Its function is as follows. Component of the mitochondrial ribosome (mitoribosome), a dedicated translation machinery responsible for the synthesis of mitochondrial genome-encoded proteins, including at least some of the essential transmembrane subunits of the mitochondrial respiratory chain. The mitoribosomes are attached to the mitochondrial inner membrane and translation products are cotranslationally integrated into the membrane. This chain is Small ribosomal subunit protein mS46 (RSM28), found in Saccharomyces cerevisiae (strain ATCC 204508 / S288c) (Baker's yeast).